Here is a 152-residue protein sequence, read N- to C-terminus: Large ribosomal subunit protein bL9 (152 aa).

The protein belongs to the bacterial ribosomal protein bL9 family.

Functionally, binds to the 23S rRNA. This is Large ribosomal subunit protein bL9 from Synechococcus sp. (strain RCC307).